Here is a 266-residue protein sequence, read N- to C-terminus: Potassium/proton antiporter CemA (266 aa).

3 helical membrane-spanning segments follow: residues 46 to 66 (VIVSVRCLITLIFVPLFINIL), 151 to 171 (FLSFLSLSVVFLLLKPQIIIL), and 226 to 246 (FMSLFVATFPVFLDTVFKYWI).

The protein belongs to the CemA family.

Its subcellular location is the plastid. The protein resides in the chloroplast inner membrane. The catalysed reaction is K(+)(in) + H(+)(out) = K(+)(out) + H(+)(in). In terms of biological role, contributes to K(+)/H(+) antiport activity by supporting proton efflux to control proton extrusion and homeostasis in chloroplasts in a light-dependent manner to modulate photosynthesis. Prevents excessive induction of non-photochemical quenching (NPQ) under continuous-light conditions. Indirectly promotes efficient inorganic carbon uptake into chloroplasts. In Chlorella vulgaris (Green alga), this protein is Potassium/proton antiporter CemA.